We begin with the raw amino-acid sequence, 381 residues long: Homoserine O-succinyltransferase (381 aa).

The AB hydrolase-1 domain occupies 45–360; the sequence is NAVLVCHALN…PHGHDAFLLD (316 aa). Ser-151 acts as the Nucleophile in catalysis. Arg-221 serves as a coordination point for substrate. Residues Asp-321 and His-354 contribute to the active site. Asp-355 contacts substrate.

The protein belongs to the AB hydrolase superfamily. MetX family. As to quaternary structure, homodimer.

Its subcellular location is the cytoplasm. It carries out the reaction L-homoserine + succinyl-CoA = O-succinyl-L-homoserine + CoA. The protein operates within amino-acid biosynthesis; L-methionine biosynthesis via de novo pathway; O-succinyl-L-homoserine from L-homoserine: step 1/1. Its function is as follows. Transfers a succinyl group from succinyl-CoA to L-homoserine, forming succinyl-L-homoserine. This Burkholderia pseudomallei (strain 1710b) protein is Homoserine O-succinyltransferase.